A 118-amino-acid polypeptide reads, in one-letter code: LYR motif containing protein 1 (118 aa).

A disordered region spans residues 91–118; that stretch reads TQKGRKLRAQQRLRKQAKPVYLQSQDET. Positions 93-107 are enriched in basic residues; it reads KGRKLRAQQRLRKQA.

Belongs to the complex I LYR family.

This chain is LYR motif containing protein 1 (lyrm1), found in Danio rerio (Zebrafish).